The chain runs to 358 residues: Acyl-CoA Delta-12 desaturase (358 aa).

2 helical membrane-spanning segments follow: residues 30–50 (IILY…AMFY) and 55–75 (TVFY…AGSH). Positions 75, 80, 112, 115, and 116 each coordinate Fe cation. A Histidine box-1 motif is present at residues 75–80 (HRLWAH). Residues 112 to 116 (HRVHH) carry the Histidine box-2 motif. Helical transmembrane passes span 175-195 (TFFA…YFWG) and 200-220 (TAFF…TFLV). Residues H225, H254, H257, and H258 each coordinate Fe cation. The short motif at 254-258 (HNYHH) is the Histidine box-3 element.

The protein belongs to the fatty acid desaturase type 1 family. Requires Fe(2+) as cofactor.

It localises to the membrane. The enzyme catalyses (9Z)-octadecenoyl-CoA + 2 Fe(II)-[cytochrome b5] + O2 + 2 H(+) = (9Z,12Z)-octadecadienoyl-CoA + 2 Fe(III)-[cytochrome b5] + 2 H2O. It carries out the reaction (9Z)-hexadecenoyl-CoA + 2 Fe(II)-[cytochrome b5] + O2 + 2 H(+) = (9Z,12Z)-hexadecadienoyl-CoA + 2 Fe(III)-[cytochrome b5] + 2 H2O. In terms of biological role, catalyzes the formation of a Delta12 double bond, acting on monounsaturated fatty acyl substrates like palmitoleoyl-CoA ((9Z)-hexadecenoyl-CoA) and oleoyl-CoA ((9Z)-octadecenoyl-CoA) with higher desaturation activity on (9Z)-octadecenoyl-CoA than (9Z)-hexadecenoyl-CoA. Requires preexisting cis double bond at the Delta9 position of fatty acyls to be able to insert the Delta12 double bond. Delta12-desaturation of (9Z)-octadecenoyl-CoA in insects produces (9Z,12Z)-octadecadienoyl-CoA (linoleoyl-CoA) which may be used to supply precursors of crucial mediators of immunity and reproduction and other essential functions. The sequence is that of Acyl-CoA Delta-12 desaturase from Tribolium castaneum (Red flour beetle).